We begin with the raw amino-acid sequence, 500 residues long: NAD(P)H-quinone oxidoreductase chain 4, chloroplastic (500 aa).

14 consecutive transmembrane segments (helical) span residues 4–24 (FPWL…MLFL), 35–55 (YTIC…CYNF), 87–107 (IGTI…AFPV), 113–130 (LFHF…GSFS), 134–154 (LLLF…LLSM), 167–187 (FILY…GISL), 211–231 (IILY…IPLH), 242–262 (HYST…YGLV), 272–292 (AHSM…IYAA), 305–325 (IAYS…SITD), 330–350 (GAIL…FLAG), 386–406 (LALP…GIIT), 416–436 (ILII…LLSM), and 466–486 (ISSL…LALA).

The protein belongs to the complex I subunit 4 family.

The protein localises to the plastid. It is found in the chloroplast thylakoid membrane. The catalysed reaction is a plastoquinone + NADH + (n+1) H(+)(in) = a plastoquinol + NAD(+) + n H(+)(out). The enzyme catalyses a plastoquinone + NADPH + (n+1) H(+)(in) = a plastoquinol + NADP(+) + n H(+)(out). The protein is NAD(P)H-quinone oxidoreductase chain 4, chloroplastic of Aethionema grandiflorum (Persian stone-cress).